Consider the following 409-residue polypeptide: Argininosuccinate synthase (409 aa).

ATP is bound by residues 12-20 and Ala-39; that span reads AYSGGLDTS. L-citrulline contacts are provided by Tyr-90 and Ser-95. Gly-120 provides a ligand contact to ATP. The L-aspartate site is built by Thr-122, Asn-126, and Asp-127. Residue Asn-126 participates in L-citrulline binding. The L-citrulline site is built by Arg-130, Ser-181, Ser-190, Glu-266, and Tyr-278.

Belongs to the argininosuccinate synthase family. Type 1 subfamily. In terms of assembly, homotetramer.

The protein localises to the cytoplasm. It carries out the reaction L-citrulline + L-aspartate + ATP = 2-(N(omega)-L-arginino)succinate + AMP + diphosphate + H(+). Its pathway is amino-acid biosynthesis; L-arginine biosynthesis; L-arginine from L-ornithine and carbamoyl phosphate: step 2/3. The polypeptide is Argininosuccinate synthase (Acidiphilium cryptum (strain JF-5)).